A 448-amino-acid chain; its full sequence is Fibulin-5 (448 aa).

Positions 1–23 (MPGIKRILTVTILALCLPSPGNA) are cleaved as a signal peptide. Residues 42–82 (DIDECRTIPEACRGDMMCVNQNGRYLCIPRTNPVYRGPYSN) form the EGF-like 1; calcium-binding domain. 17 cysteine pairs are disulfide-bonded: C46–C59, C53–C68, C131–C144, C138–C153, C155–C166, C172–C181, C177–C190, C192–C205, C211–C221, C217–C230, C232–C245, C251–C262, C258–C271, C273–C286, C292–C305, C299–C314, and C320–C332. The Cell attachment site motif lies at 54–56 (RGD). Residues 127 to 167 (DVDECATDSHQCNPTQICINTEGGYTCSCTDGYWLLEGQCL) enclose the EGF-like 2; calcium-binding domain. The region spanning 168-206 (DIDECRYGYCQQLCANVPGSYSCTCNPGFTLNEDGRSCQ) is the EGF-like 3; calcium-binding domain. An EGF-like 4; calcium-binding domain is found at 207-246 (DVNECATENPCVQTCVNTYGSFICRCDPGYELEEDGVHCS). Residues 245–448 (CSDMDECSFS…LRIYVSQYPF (204 aa)) are interaction with LOXL1. The EGF-like 5; calcium-binding domain maps to 247–287 (DMDECSFSEFLCQHECVNQPGTYFCSCPPGYILLDDNRSCQ). N-linked (GlcNAc...) asparagine glycans are attached at residues N283 and N296. An EGF-like 6; calcium-binding domain is found at 288-333 (DINECEHRNHTCNLQQTCYNLQGGFKCIDPIRCEEPYLRISDNRCM).

It belongs to the fibulin family. As to quaternary structure, homodimer. Monomer, homodimerizes in presence of Ca(2+). Interacts with ELN. Interacts (via N-terminus) with the integrins ITGAV/ITGB3, ITGAV/ITGB5 and ITGA9/ITGB1. Interacts with FBN1 (via N-terminal domain). Forms a ternary complex with ELN and FBN1. Interacts with EFEMP2 with moderate affinity. Interacts with LOXL1. Post-translationally, N-glycosylated.

The protein resides in the secreted. It is found in the extracellular space. It localises to the extracellular matrix. In terms of biological role, essential for elastic fiber formation, is involved in the assembly of continuous elastin (ELN) polymer and promotes the interaction of microfibrils and ELN. Stabilizes and organizes elastic fibers in the skin, lung and vasculature. Promotes adhesion of endothelial cells through interaction of integrins and the RGD motif. Vascular ligand for integrin receptors which may play a role in vascular development and remodeling. May act as an adapter that mediates the interaction between FBN1 and ELN. The polypeptide is Fibulin-5 (FBLN5) (Pongo abelii (Sumatran orangutan)).